We begin with the raw amino-acid sequence, 382 residues long: Carboxynorspermidine/carboxyspermidine decarboxylase (382 aa).

An N6-(pyridoxal phosphate)lysine modification is found at Lys41. Substrate contacts are provided by Glu236 and Asp272.

The protein belongs to the Orn/Lys/Arg decarboxylase class-II family. NspC subfamily. As to quaternary structure, homodimer. Pyridoxal 5'-phosphate serves as cofactor.

The protein localises to the cytoplasm. It catalyses the reaction carboxynorspermidine + H(+) = norspermidine + CO2. The enzyme catalyses carboxyspermidine + H(+) = spermidine + CO2. Functionally, catalyzes the decarboxylation of carboxynorspermidine and carboxyspermidine in vitro. In vivo, responsible for synthesizing spermidine, but not sym-norspermidine. The sequence is that of Carboxynorspermidine/carboxyspermidine decarboxylase from Campylobacter jejuni subsp. jejuni serotype O:6 (strain 81116 / NCTC 11828).